Consider the following 385-residue polypeptide: Lipoyl synthase, mitochondrial (385 aa).

[4Fe-4S] cluster is bound by residues Cys-107, Cys-112, Cys-118, Cys-137, Cys-141, Cys-144, and Ser-352. The region spanning 122-341 (KKSEATATIM…RDTALKMGFL (220 aa)) is the Radical SAM core domain.

Belongs to the radical SAM superfamily. Lipoyl synthase family. The cofactor is [4Fe-4S] cluster.

The protein localises to the mitochondrion. The catalysed reaction is [[Fe-S] cluster scaffold protein carrying a second [4Fe-4S](2+) cluster] + N(6)-octanoyl-L-lysyl-[protein] + 2 oxidized [2Fe-2S]-[ferredoxin] + 2 S-adenosyl-L-methionine + 4 H(+) = [[Fe-S] cluster scaffold protein] + N(6)-[(R)-dihydrolipoyl]-L-lysyl-[protein] + 4 Fe(3+) + 2 hydrogen sulfide + 2 5'-deoxyadenosine + 2 L-methionine + 2 reduced [2Fe-2S]-[ferredoxin]. It participates in protein modification; protein lipoylation via endogenous pathway; protein N(6)-(lipoyl)lysine from octanoyl-[acyl-carrier-protein]: step 2/2. In terms of biological role, catalyzes the radical-mediated insertion of two sulfur atoms into the C-6 and C-8 positions of the octanoyl moiety bound to the lipoyl domains of lipoate-dependent enzymes, thereby converting the octanoylated domains into lipoylated derivatives. This is Lipoyl synthase, mitochondrial from Meyerozyma guilliermondii (strain ATCC 6260 / CBS 566 / DSM 6381 / JCM 1539 / NBRC 10279 / NRRL Y-324) (Yeast).